The sequence spans 796 residues: Serine/threonine-protein kinase ATG1 (796 aa).

One can recognise a Protein kinase domain in the interval 9–304 (YVVGAEIGRG…FQEFFNDPVI (296 aa)). ATP-binding positions include 15 to 23 (IGRGSFANV) and Lys38. Asp155 acts as the Proton acceptor in catalysis. Residues 360–370 (LEEEDEEEDQD) show a composition bias toward acidic residues. Disordered regions lie at residues 360–382 (LEEE…IQHM), 389–408 (LLNK…RREL), and 450–480 (PYTR…KVPI). Over residues 389–403 (LLNKTTQKQTEVQSQ) the composition is skewed to polar residues. Over residues 453 to 470 (RRYSSSSRSSSTGSNQRR) the composition is skewed to low complexity.

Belongs to the protein kinase superfamily. Ser/Thr protein kinase family. APG1/unc-51/ULK1 subfamily. In terms of assembly, homodimer. Forms a ternary complex with ATG13 and ATG17.

It localises to the cytoplasm. The protein resides in the preautophagosomal structure membrane. It carries out the reaction L-seryl-[protein] + ATP = O-phospho-L-seryl-[protein] + ADP + H(+). It catalyses the reaction L-threonyl-[protein] + ATP = O-phospho-L-threonyl-[protein] + ADP + H(+). Its function is as follows. Serine/threonine protein kinase involved in the cytoplasm to vacuole transport (Cvt) and found to be essential in autophagy, where it is required for the formation of autophagosomes. Involved in the clearance of protein aggregates which cannot be efficiently cleared by the proteasome. Required for selective autophagic degradation of the nucleus (nucleophagy) as well as for mitophagy which contributes to regulate mitochondrial quantity and quality by eliminating the mitochondria to a basal level to fulfill cellular energy requirements and preventing excess ROS production. Also involved in endoplasmic reticulum-specific autophagic process, in selective removal of ER-associated degradation (ERAD) substrates. Plays a key role in ATG9 and ATG23 cycling through the pre-autophagosomal structure and is necessary to promote ATG18 binding to ATG9 through phosphorylation of ATG9. Catalyzes phosphorylation of ATG4, decreasing the interaction between ATG4 and ATG8 and impairing deconjugation of PE-conjugated forms of ATG8. The sequence is that of Serine/threonine-protein kinase ATG1 from Komagataella pastoris (Yeast).